The following is a 333-amino-acid chain: Ornithine carbamoyltransferase (333 aa).

Carbamoyl phosphate-binding positions include 56–59, Q83, R107, and 134–137; these read STRT and HPTQ. Residues N167, D231, and 235-236 each bind L-ornithine; that span reads SM. Carbamoyl phosphate contacts are provided by residues 273–274 and R318; that span reads CL.

Belongs to the aspartate/ornithine carbamoyltransferase superfamily. OTCase family.

The protein resides in the cytoplasm. It catalyses the reaction carbamoyl phosphate + L-ornithine = L-citrulline + phosphate + H(+). It participates in amino-acid biosynthesis; L-arginine biosynthesis; L-arginine from L-ornithine and carbamoyl phosphate: step 1/3. Functionally, has vitronectin and fibronectin-binding activity. Its function is as follows. Reversibly catalyzes the transfer of the carbamoyl group from carbamoyl phosphate (CP) to the N(epsilon) atom of ornithine (ORN) to produce L-citrulline. The chain is Ornithine carbamoyltransferase (argF) from Staphylococcus epidermidis (strain ATCC 12228 / FDA PCI 1200).